Here is a 148-residue protein sequence, read N- to C-terminus: Protein TIFY 5B (148 aa).

The Tify domain occupies 54–89 (PKQESQILTIFYNGHMCVSSDLTHLEANAILSLASR).

This sequence belongs to the TIFY/JAZ family. In terms of processing, ubiquitinated. Targeted for degradation by the SCF(COI1) E3 ubiquitin ligase-proteasome pathway during jasmonate signaling.

It localises to the nucleus. Repressor of jasmonate responses. The sequence is that of Protein TIFY 5B (TIFY 5B) from Arabidopsis thaliana (Mouse-ear cress).